A 425-amino-acid chain; its full sequence is MRYTFSDEKKATTTTTSRAKSQARLLNSASYRRAARTTLRHSYGMGMWRAVALLACLSATHAALFTEGGAVQNGKDNKANKYVEFAHDDKINKEDLLKYYGKEVEQYKDDDSYMEYLIEYMKSHPVPAQFPNFEQEAEQEHQDELNQWLEQLMNEQELLEPANAAVKDAEQKAPLAPVHHKQVAQKPAQEPFDLDDLLRGELMLENEIAKESELKKTQEKLSEQTPSAKANVESLESAMQTATGEPQVPQKKGQNEFVSFVEQEPQPAKQTISSQTVDKRRLATSAEYSGSAPRYSSSSLLLLAVGTVMCVGLIGTVAGGTYYYKNNRRTETPDDGEYAPYAGTGPGFRKNKGNKGDETLAYKAQLHQYQQAKQKIICGEDAPGIIESDGEDGADEENNYSVYECPGLAPTGDIEVCNPNFAAQP.

Basic and acidic residues predominate over residues methionine 1–alanine 11. 2 disordered regions span residues methionine 1 to lysine 20 and leucine 214 to lysine 251. An AEX-3-binding region spans residues glutamate 205–glutamine 424. Residues leucine 300–glycine 320 form a helical membrane-spanning segment. Residues aspartate 334–lysine 355 are disordered.

The protein belongs to the NPDC1/cab-1 family. Binds to the RAB3 GDP/GTP exchange factor aex-3. In terms of tissue distribution, expressed in a variety of neurons.

Its subcellular location is the membrane. The sequence is that of Protein cab-1 (cab-1) from Caenorhabditis elegans.